We begin with the raw amino-acid sequence, 742 residues long: MADILSQSETLASQDLSGDFKKPALPVSPAARSKAPASSSSNPEEVQKEGPTALQDSNSGEPDIPPPQPDCGDFRSLQEEQSRPPTAVSSPGGPARAPPYQEPPWGGPATAPYSLETLKGGTILGTRSLKGTSYCLFGRLSGCDVCLEHPSVSRYHAVLQHRASGPDGECDSNGPGFYLYDLGSTHGTFLNKTRIPPRTYCRVHVGHVVRFGGSTRLFILQGPEEDREAESELTVTQLKELRKQQQILLEKKMLGEDSDEEEEMDTSERKINAGSQDDEMGCTWGMGEDAVEDDAEENPIVLEFQQEREAFYIKDPKKALQGFFDREGEELEYEFDEQGHSTWLCRVRLPVDDSTGKQLVAEAIHSGKKKEAMIQCSLEACRILDTLGLLRQEAVSRKRKAKNWEDEDFYDSDDDTFLDRTGLIEKKRLNRMKKAGKIDEKPETFESLVAKLNDAERELSEISERLKASSQVLSESPSQDSLDAFMSEMKSGSTLDGVSRKKLHLRTFELRKEQQRLKGLIKIVKPAEIPELKKTETQTTGAENKAKKLTLPLFGAMKGGSKFKLKTGTVGKLPPKRPELPPTLMRMKDEPEVEEEEEEEEEEEKEKEEHEKKKLEDGSLSRPQPEIEPEAAVQEMRPPTDLTHFKETQTHENMSQLSEEEQNKDYQDCSKTTSLCAGPSASKNEYEKSRGELKKKKTPGPGKLPPTLSSKYPEDDPDYCVWVPPEGQSGDGRTHLNDKYGY.

Over residues 1–16 the composition is skewed to polar residues; sequence MADILSQSETLASQDL. Residues 1–112 form a disordered region; sequence MADILSQSET…PPWGGPATAP (112 aa). The segment covering 27-43 has biased composition (low complexity); sequence VSPAARSKAPASSSSNP. The residue at position 28 (Ser-28) is a Phosphoserine. The segment covering 72–82 has biased composition (basic and acidic residues); that stretch reads GDFRSLQEEQS. Phosphoserine is present on Ser-90. The span at 96-106 shows a compositional bias: pro residues; the sequence is RAPPYQEPPWG. An FHA domain is found at 135 to 195; sequence CLFGRLSGCD…HGTFLNKTRI (61 aa). A disordered region spans residues 254–282; it reads LGEDSDEEEEMDTSERKINAGSQDDEMGC. Residues 256–265 are compositionally biased toward acidic residues; the sequence is EDSDEEEEMD. Residues Ser-258 and Ser-412 each carry the phosphoserine modification. Lys-441 participates in a covalent cross-link: Glycyl lysine isopeptide (Lys-Gly) (interchain with G-Cter in SUMO2). Positions 443-476 form a coiled coil; the sequence is ETFESLVAKLNDAERELSEISERLKASSQVLSES. Ser-476 bears the Phosphoserine mark. The interval 565-742 is disordered; it reads LKTGTVGKLP…RTHLNDKYGY (178 aa). Residues 591 to 606 show a composition bias toward acidic residues; that stretch reads PEVEEEEEEEEEEEKE. Residues 607–619 show a composition bias toward basic and acidic residues; that stretch reads KEEHEKKKLEDGS. 2 positions are modified to phosphoserine: Ser-655 and Ser-658. Residues 699–708 show a composition bias toward low complexity; that stretch reads PGPGKLPPTL. Residues 732–742 show a composition bias toward basic and acidic residues; it reads GRTHLNDKYGY.

Ubiquitously expressed.

Its subcellular location is the nucleus. It localises to the cytoplasm. The sequence is that of Kanadaptin (SLC4A1AP) from Homo sapiens (Human).